The following is a 162-amino-acid chain: Caveolin-2 (162 aa).

Topologically, residues 1 to 86 (MGLETEKADV…FEISKYVMYK (86 aa)) are cytoplasmic. Tyrosine 19 is subject to Phosphotyrosine; by SRC. Serine 20 is modified (phosphoserine). Tyrosine 27 carries the post-translational modification Phosphotyrosine; by SRC. Residue serine 36 is modified to Phosphoserine. Residues 87-107 (FLTVFLAIPLAFAAGILFATL) constitute an intramembrane region (helical). The Cytoplasmic portion of the chain corresponds to 108-162 (SCLHIWIIMPFVKTCLMVLPSVQTIWKSVTDVIIAPLCTSVGRSLSSISLQLSHD).

Belongs to the caveolin family. Monomer or homodimer. Interacts with CAV1; the interaction forms a stable heterooligomeric complex that is required for targeting to lipid rafts and for caveolae formation. Tyrosine phosphorylated forms do not form heterooligomers with the Tyr-19-phosphorylated form existing as a monomer or dimer, and the Tyr-27-form as a monomer only. Interacts (tyrosine phosphorylated form) with the SH2 domain-containing proteins, RASA1, NCK1 and SRC. Interacts (tyrosine phosphorylated form) with INSR, the interaction (Tyr-27-phosphorylated form) is increased on insulin stimulation. Interacts (Tyr-19 phosphorylated form) with MAPK1 (phosphorylated form); the interaction, promoted by insulin, leads to nuclear location and MAPK1 activation. Interacts with STAT3; the interaction is increased on insulin-induced tyrosine phosphorylation leading to STAT activation. Post-translationally, phosphorylated on serine and tyrosine residues. Phosphorylation on Ser-36 appears to modulate mitosis in endothelial cells. Phosphorylation on both Tyr-19 and Tyr-27 is required for insulin-induced 'Ser-727' phosphorylation of STAT3 and its activation. Phosphorylation on Tyr-19 is required for insulin-induced phosphorylation of MAPK1 and DNA binding of STAT3. Tyrosine phosphorylation is induced by both EGF and insulin.

It localises to the nucleus. The protein localises to the cytoplasm. The protein resides in the golgi apparatus membrane. Its subcellular location is the cell membrane. It is found in the membrane. It localises to the caveola. May act as a scaffolding protein within caveolar membranes. Interacts directly with G-protein alpha subunits and can functionally regulate their activity. Acts as an accessory protein in conjunction with CAV1 in targeting to lipid rafts and driving caveolae formation. The Ser-36 phosphorylated form has a role in modulating mitosis in endothelial cells. Positive regulator of cellular mitogenesis of the MAPK signaling pathway. Required for the insulin-stimulated nuclear translocation and activation of MAPK1 and STAT3, and the subsequent regulation of cell cycle progression. In Eulemur macaco macaco (Black lemur), this protein is Caveolin-2 (CAV2).